The chain runs to 275 residues: Ribosomal RNA small subunit methyltransferase A (275 aa).

S-adenosyl-L-methionine is bound by residues Asn21, Leu23, Gly48, Glu69, Asp94, and Asn115.

This sequence belongs to the class I-like SAM-binding methyltransferase superfamily. rRNA adenine N(6)-methyltransferase family. RsmA subfamily.

The protein resides in the cytoplasm. It catalyses the reaction adenosine(1518)/adenosine(1519) in 16S rRNA + 4 S-adenosyl-L-methionine = N(6)-dimethyladenosine(1518)/N(6)-dimethyladenosine(1519) in 16S rRNA + 4 S-adenosyl-L-homocysteine + 4 H(+). Its function is as follows. Specifically dimethylates two adjacent adenosines (A1518 and A1519) in the loop of a conserved hairpin near the 3'-end of 16S rRNA in the 30S particle. May play a critical role in biogenesis of 30S subunits. The sequence is that of Ribosomal RNA small subunit methyltransferase A from Clostridium botulinum (strain Loch Maree / Type A3).